Reading from the N-terminus, the 185-residue chain is Photosystem I assembly protein Ycf4 (185 aa).

The next 2 helical transmembrane spans lie at 21–43 (NFFW…ASSY) and 63–85 (GVVM…CTIL).

Belongs to the Ycf4 family.

The protein localises to the plastid. The protein resides in the chloroplast thylakoid membrane. Seems to be required for the assembly of the photosystem I complex. The sequence is that of Photosystem I assembly protein Ycf4 from Saccharum hybrid (Sugarcane).